Reading from the N-terminus, the 253-residue chain is Salivary gland SP38-40.B protein (253 aa).

The N-terminal stretch at 1–21 is a signal peptide; it reads MRIKFLVVLAVICLLAHYASA. Disordered stretches follow at residues 23–51, 140–168, and 203–253; these read GMGG…VKAD, KDEK…KECS, and VQGK…DAKK. Basic and acidic residues-rich tracts occupy residues 26–51 and 154–168; these read GDKK…VKAD and PPKE…KECS. Repeat copies occupy residues 29 to 34 and 35 to 40. The segment at 29-47 is 3 X 6 AA approximate tandem repeats of K-P-K-D-A-P; that stretch reads KPKDAPKPKDAPKPKEVKP. One copy of the 1-3; approximate repeat lies at 41–47; it reads KPKEVKP. 2 consecutive repeat copies span residues 153-156 and 158-161. A 3 X 4 AA approximate tandem repeats of K-P-P-K region spans residues 153–166; the sequence is KPPKEKPPKKPRKE. Residues 162-166 form a 2-3; approximate repeat; it reads KPRKE. Over residues 206–217 the composition is skewed to basic residues; sequence KQKKGAKKAKGG. 6 consecutive repeat copies span residues 222-225, 226-229, 230-233, 234-237, 238-241, and 242-245. A 7 X 4 AA approximate tandem repeats of P-K-P-[GAV] region spans residues 222–249; sequence PKPGPKPAPKPGPKPAPKPVPKPADKPK. Pro residues predominate over residues 225 to 243; the sequence is GPKPAPKPGPKPAPKPVPK. Residues 244-253 show a composition bias toward basic and acidic residues; sequence PADKPKDAKK. The 3-7; approximate repeat unit spans residues 246-249; it reads DKPK.

Salivary gland.

The protein localises to the secreted. Functionally, used by the larvae to construct a supramolecular structure, the larval tube. This chain is Salivary gland SP38-40.B protein (SP38-40.B), found in Chironomus tentans (Midge).